Here is a 412-residue protein sequence, read N- to C-terminus: Sexual development regulator umv3 (412 aa).

Residues 1–197 (MSAQDDIDTG…PPLLSDLPRH (197 aa)) are disordered. Polar residues-rich tracts occupy residues 73-93 (RANT…SASS) and 149-170 (RQSA…PGST). The span at 171 to 181 (ENERVRMHDQR) shows a compositional bias: basic and acidic residues. A Velvet domain is found at 195-388 (PRHSTDNKTY…ARQGIQVPVR (194 aa)).

Belongs to the velvet family. VelC subfamily.

It localises to the nucleus. Functionally, velvet-domain-containing protein not required for disease or sexual development on seedlings. The protein is Sexual development regulator umv3 of Mycosarcoma maydis (Corn smut fungus).